Reading from the N-terminus, the 354-residue chain is Guanine nucleotide-binding protein G(i) subunit alpha-3 (354 aa).

Gly2 is lipidated: N-myristoyl glycine. Cys3 carries S-palmitoyl cysteine lipidation. The 323-residue stretch at 32 to 354 (KEVKLLLLGA…KNNLKECGLY (323 aa)) folds into the G-alpha domain. The interval 35-48 (KLLLLGAGESGKST) is G1 motif. GTP is bound by residues Gly42, Glu43, Ser44, Gly45, Lys46, Ser47, Thr48, Asp150, Ser151, Leu175, Arg176, Thr177, Arg178, Val179, Lys180, Thr181, Val201, Gly203, Asn269, Lys270, Asp272, Leu273, Cys325, Ala326, and Thr327. Ser47 is a Mg(2+) binding site. Residues 173–181 (DVLRTRVKT) form a G2 motif region. Thr181 lines the Mg(2+) pocket. Positions 196–205 (FKMFDVGGQR) are G3 motif. Positions 265-272 (ILFLNKKD) are G4 motif. The segment at 324–329 (TCATDT) is G5 motif.

Belongs to the G-alpha family. G(i/o/t/z) subfamily. Heterotrimeric G proteins are composed of 3 units; alpha, beta and gamma. The alpha subunit contains the guanine nucleotide binding site. GTP binding causes dissociation of the heterotrimer, liberating the individual subunits so that they can interact with downstream effector proteins. Forms a complex with CCDC88A/GIV and EGFR which leads to enhanced EGFR signaling and triggering of cell migration; ligand stimulation is required for recruitment of GNAI3 to the complex. Interacts (inactive GDP-bound form) with CCDC88A/GIV (via GBA motif); the interaction leads to activation of GNAI3. Interacts (inactive GDP-bound form) with CCDC88C/DAPLE (via GBA motif); the interaction leads to activation of GNAI3. Interacts (inactive GDP-bound form) with NUCB1 (via GBA motif) and NUCB2 (via GBA motif); the interaction leads to activation of GNAI3. Interacts (inactive GDP-bound form) with PLCD4 (via GBA motif); the interaction leads to activation of GNAI3. Interacts with INSR; the interaction is probably mediated by CCDC88A/GIV. Interacts with GPSM1. Interacts (GDP-bound form) with GPSM2 (via GoLoco domains). Does not interact with RGS2. Interacts with RGS8 and RGS10; this strongly enhances the intrinsic GTPase activity. Interacts with RGS16; this strongly enhances the intrinsic GTPase activity. Interacts with RGS12. Interacts (via active GTP- or inactive GDP-bound form) with RGS14. Interacts (via active GTP-bound form) with TRPC5 (via ANK repeats) in a homotetrameric ion channel; the interaction is direct and activates the channel activity.

It localises to the cytoplasm. The protein resides in the cell membrane. The protein localises to the cytoskeleton. Its subcellular location is the microtubule organizing center. It is found in the centrosome. Its function is as follows. Heterotrimeric guanine nucleotide-binding proteins (G proteins) function as transducers downstream of G protein-coupled receptors (GPCRs) in numerous signaling cascades. The alpha chain contains the guanine nucleotide binding site and alternates between an active, GTP-bound state and an inactive, GDP-bound state. Signaling by an activated GPCR promotes GDP release and GTP binding. The alpha subunit has a low GTPase activity that converts bound GTP to GDP, thereby terminating the signal. Both GDP release and GTP hydrolysis are modulated by numerous regulatory proteins. Signaling is mediated via effector proteins, such as adenylate cyclase. Inhibits adenylate cyclase activity, leading to decreased intracellular cAMP levels. Stimulates the activity of receptor-regulated K(+) channels. The active GTP-bound form prevents the association of RGS14 with centrosomes and is required for the translocation of RGS14 from the cytoplasm to the plasma membrane. May play a role in cell division. The active GTP-bound form activates the calcium permeant TRPC5 ion channels. This is Guanine nucleotide-binding protein G(i) subunit alpha-3 (Gnai3) from Mus musculus (Mouse).